The primary structure comprises 679 residues: Single-strand DNA endonuclease ASTE1 (679 aa).

The segment at 351–400 is interaction with SHLD2; the sequence is TILPTQVENMQQPNAHRISQPIRQIIYGLLLNASPHLDKTSWNALPPQPL. Residues 625 to 645 are disordered; the sequence is RSNSKKKRQKKQNTSCSKNRG. Over residues 626–635 the composition is skewed to basic residues; that stretch reads SNSKKKRQKK.

Belongs to the asteroid family. Interacts with SHLD1, SHLD2, SHLD3, RIF1 and MAD2L2/REV7.

In terms of biological role, structure-specific DNA endonuclease that specifically cleaves single-stranded DNA and 3' overhang DNA. Contributes to the control of DNA double-strand break repair choice by antagonizing BRCA1-dependent homologous recombination (HR) and promoting non-homologous end-joining (NHEJ). Recruited to the single-stranded DNA ends by SHLD2 and cleaves the 3' exposed DNA ends, therefore inhibiting DNA end resection (necessary for HR) and promoting DNA end protection (necessary for NHEJ). This chain is Single-strand DNA endonuclease ASTE1 (ASTE1), found in Pongo abelii (Sumatran orangutan).